A 148-amino-acid polypeptide reads, in one-letter code: 3-dehydroquinate dehydratase (148 aa).

Residue tyrosine 26 is the Proton acceptor of the active site. Substrate-binding residues include asparagine 77, histidine 83, and aspartate 90. Residue histidine 103 is the Proton donor of the active site. Residues 104–105 and arginine 114 contribute to the substrate site; that span reads LS.

This sequence belongs to the type-II 3-dehydroquinase family. In terms of assembly, homododecamer.

It catalyses the reaction 3-dehydroquinate = 3-dehydroshikimate + H2O. Its pathway is metabolic intermediate biosynthesis; chorismate biosynthesis; chorismate from D-erythrose 4-phosphate and phosphoenolpyruvate: step 3/7. In terms of biological role, catalyzes a trans-dehydration via an enolate intermediate. The protein is 3-dehydroquinate dehydratase (aroQ) of Pasteurella multocida (strain Pm70).